A 157-amino-acid chain; its full sequence is Endoribonuclease YbeY (157 aa).

Residues His114, His118, and His124 each coordinate Zn(2+).

The protein belongs to the endoribonuclease YbeY family. It depends on Zn(2+) as a cofactor.

It localises to the cytoplasm. In terms of biological role, single strand-specific metallo-endoribonuclease involved in late-stage 70S ribosome quality control and in maturation of the 3' terminus of the 16S rRNA. The protein is Endoribonuclease YbeY of Caulobacter vibrioides (strain ATCC 19089 / CIP 103742 / CB 15) (Caulobacter crescentus).